The following is a 271-amino-acid chain: Formamidopyrimidine-DNA glycosylase (271 aa).

The active-site Schiff-base intermediate with DNA is P2. The active-site Proton donor is the E3. K58 functions as the Proton donor; for beta-elimination activity in the catalytic mechanism. The DNA site is built by H92, R111, and R152. An FPG-type zinc finger spans residues 237–271; sequence MVYGREGEACRHCGGELKHATIGQRATVWCAACQR. The active-site Proton donor; for delta-elimination activity is the R261.

This sequence belongs to the FPG family. In terms of assembly, monomer. It depends on Zn(2+) as a cofactor.

The enzyme catalyses Hydrolysis of DNA containing ring-opened 7-methylguanine residues, releasing 2,6-diamino-4-hydroxy-5-(N-methyl)formamidopyrimidine.. The catalysed reaction is 2'-deoxyribonucleotide-(2'-deoxyribose 5'-phosphate)-2'-deoxyribonucleotide-DNA = a 3'-end 2'-deoxyribonucleotide-(2,3-dehydro-2,3-deoxyribose 5'-phosphate)-DNA + a 5'-end 5'-phospho-2'-deoxyribonucleoside-DNA + H(+). Functionally, involved in base excision repair of DNA damaged by oxidation or by mutagenic agents. Acts as a DNA glycosylase that recognizes and removes damaged bases. Has a preference for oxidized purines, such as 7,8-dihydro-8-oxoguanine (8-oxoG). Has AP (apurinic/apyrimidinic) lyase activity and introduces nicks in the DNA strand. Cleaves the DNA backbone by beta-delta elimination to generate a single-strand break at the site of the removed base with both 3'- and 5'-phosphates. The polypeptide is Formamidopyrimidine-DNA glycosylase (Xanthomonas campestris pv. campestris (strain ATCC 33913 / DSM 3586 / NCPPB 528 / LMG 568 / P 25)).